The chain runs to 238 residues: 1-(5-phosphoribosyl)-5-[(5-phosphoribosylamino)methylideneamino] imidazole-4-carboxamide isomerase (238 aa).

Asp-8 serves as the catalytic Proton acceptor. The active-site Proton donor is Asp-129.

It belongs to the HisA/HisF family.

It is found in the cytoplasm. The enzyme catalyses 1-(5-phospho-beta-D-ribosyl)-5-[(5-phospho-beta-D-ribosylamino)methylideneamino]imidazole-4-carboxamide = 5-[(5-phospho-1-deoxy-D-ribulos-1-ylimino)methylamino]-1-(5-phospho-beta-D-ribosyl)imidazole-4-carboxamide. Its pathway is amino-acid biosynthesis; L-histidine biosynthesis; L-histidine from 5-phospho-alpha-D-ribose 1-diphosphate: step 4/9. This Anaeromyxobacter dehalogenans (strain 2CP-1 / ATCC BAA-258) protein is 1-(5-phosphoribosyl)-5-[(5-phosphoribosylamino)methylideneamino] imidazole-4-carboxamide isomerase.